We begin with the raw amino-acid sequence, 586 residues long: Phosphatidylinositol-3-phosphatase SAC1-B (586 aa).

The Cytoplasmic segment spans residues 1–519 (MASTYNSFNL…TPLHEPKDWK (519 aa)). One can recognise an SAC domain in the interval 121-450 (LNSVLNTDGF…ANACAKQYAG (330 aa)). Positions 451-586 (TGALKTDFTR…PRLVQKEKMD (136 aa)) are essential for phosphatidylinositol-4-phosphate phosphatase activity. Residues 520-540 (FLTLPIIMVVAFSMCIICLLM) form a helical membrane-spanning segment. Residues 541–547 (AGDTWTE) lie on the Lumenal side of the membrane. A helical transmembrane segment spans residues 548-568 (TLAYVLFWGSASVVTGGVILF). Residues 569–586 (NGRDFVDAPRLVQKEKMD) are Cytoplasmic-facing.

The protein localises to the endoplasmic reticulum membrane. The protein resides in the golgi apparatus membrane. It carries out the reaction a 1,2-diacyl-sn-glycero-3-phospho-(1D-myo-inositol-3-phosphate) + H2O = a 1,2-diacyl-sn-glycero-3-phospho-(1D-myo-inositol) + phosphate. The catalysed reaction is a 1,2-diacyl-sn-glycero-3-phospho-(1D-myo-inositol 4-phosphate) + H2O = a 1,2-diacyl-sn-glycero-3-phospho-(1D-myo-inositol) + phosphate. Its function is as follows. Phosphoinositide phosphatase which catalyzes the hydrolysis of phosphatidylinositol 4-phosphate (PtdIns(4)P), phosphatidylinositol 3-phosphate (PtdIns(3)P) and has low activity towards phosphatidylinositol-3,5-bisphosphate (PtdIns(3,5)P2). This is Phosphatidylinositol-3-phosphatase SAC1-B (sacm1lb) from Danio rerio (Zebrafish).